Consider the following 182-residue polypeptide: Regulatory protein RecX (182 aa).

The disordered stretch occupies residues 12 to 54; sequence LSQRDHSESELRRKLAAPPFSAKGNWGKRSGAKSSNLVESNPV. The segment covering 13–24 has biased composition (basic and acidic residues); sequence SQRDHSESELRR. Over residues 43-54 the composition is skewed to polar residues; it reads AKSSNLVESNPV.

The protein belongs to the RecX family.

The protein resides in the cytoplasm. Its function is as follows. Modulates RecA activity. The chain is Regulatory protein RecX from Yersinia pseudotuberculosis serotype I (strain IP32953).